The sequence spans 32 residues: MSDIN-like toxin proprotein 2 (32 aa).

Positions 1 to 10 (MSDINATRLP) are excised as a propeptide. A cross-link (cyclopeptide (His-Pro)) is located at residues 11–17 (HLVRYPP). Residues 18–32 (YVGDGTDLTLNRGEK) constitute a propeptide that is removed on maturation.

The protein belongs to the MSDIN fungal toxin family. Processed by the macrocyclase-peptidase enzyme POPB to yield a toxic cyclic heptapeptide. POPB first removes 10 residues from the N-terminus. Conformational trapping of the remaining peptide forces the enzyme to release this intermediate rather than proceed to macrocyclization. The enzyme rebinds the remaining peptide in a different conformation and catalyzes macrocyclization of the N-terminal 7 residues.

In terms of biological role, probable toxin that belongs to the MSDIN-like toxin family responsible for a large number of food poisoning cases and deaths. The protein is MSDIN-like toxin proprotein 2 of Amanita fuligineoides.